The sequence spans 326 residues: Cinnamoyl-CoA reductase CAD2 (326 aa).

NADP(+) contacts are provided by residues 14-20, R39, K46, 66-67, and 86-88; these read GASGYIA, NL, and TAS. S130, Y136, R141, and Y165 together coordinate (E)-coniferaldehyde. NADP(+) contacts are provided by residues Y165, K169, 192–195, and S207; that span reads PAMV. K169 acts as the Proton donor in catalysis. Positions 194, 207, 226, 257, and 290 each coordinate (E)-coniferaldehyde.

The protein belongs to the NAD(P)-dependent epimerase/dehydratase family. Dihydroflavonol-4-reductase subfamily.

The protein resides in the cytoplasm. The catalysed reaction is (E)-cinnamaldehyde + NADP(+) + CoA = (E)-cinnamoyl-CoA + NADPH + H(+). It carries out the reaction (E)-coniferaldehyde + NADP(+) + CoA = (E)-feruloyl-CoA + NADPH + H(+). It catalyses the reaction (E)-4-coumaraldehyde + NADP(+) + CoA = (E)-4-coumaroyl-CoA + NADPH + H(+). It participates in aromatic compound metabolism; phenylpropanoid biosynthesis. Functionally, involved in lignin biosynthesis. Regulates the monolignol composition by catalyzing the conversion of cinnamoyl-CoAs into their corresponding cinnamaldehydes. Can use coumaraldehyde and coniferaldehyde as substrates, but barely sinapaldehyde. The protein is Cinnamoyl-CoA reductase CAD2 of Medicago truncatula (Barrel medic).